The primary structure comprises 207 residues: Outer-membrane lipoprotein LolB (207 aa).

An N-terminal signal peptide occupies residues 1-21 (MPLPDFRFIRLLPLAALVLTA). Cysteine 22 is lipidated: N-palmitoyl cysteine. Cysteine 22 carries S-diacylglycerol cysteine lipidation.

This sequence belongs to the LolB family. As to quaternary structure, monomer.

It is found in the cell outer membrane. Its function is as follows. Plays a critical role in the incorporation of lipoproteins in the outer membrane after they are released by the LolA protein. This Escherichia coli O6:K15:H31 (strain 536 / UPEC) protein is Outer-membrane lipoprotein LolB.